Reading from the N-terminus, the 296-residue chain is 4-hydroxybenzoate octaprenyltransferase (296 aa).

A run of 8 helical transmembrane segments spans residues 28–48 (PIGIYLLLWPTLVAVWIAGNG), 55–75 (VLIFALGVVLMRAAGCCINDF), 102–122 (AVMLFALLVGVSFLLVLCTNA), 145–167 (TYYPQVVLGAAYSWGIPMAFTAA), 174–196 (SAWLLYIANLLWTVGYDTYYAMV), 219–239 (VIILTLQLLSLGCLLLAGNRF), 241–261 (LGGWYHLGLLAAAACFAWEFW), and 275–295 (FLHNHWAGMLIFIGVVLDYAL).

This sequence belongs to the UbiA prenyltransferase family. The cofactor is Mg(2+).

It is found in the cell inner membrane. The catalysed reaction is all-trans-octaprenyl diphosphate + 4-hydroxybenzoate = 4-hydroxy-3-(all-trans-octaprenyl)benzoate + diphosphate. It functions in the pathway cofactor biosynthesis; ubiquinone biosynthesis. Its function is as follows. Catalyzes the prenylation of para-hydroxybenzoate (PHB) with an all-trans polyprenyl group. Mediates the second step in the final reaction sequence of ubiquinone-8 (UQ-8) biosynthesis, which is the condensation of the polyisoprenoid side chain with PHB, generating the first membrane-bound Q intermediate 3-octaprenyl-4-hydroxybenzoate. The sequence is that of 4-hydroxybenzoate octaprenyltransferase from Pseudomonas entomophila (strain L48).